A 230-amino-acid chain; its full sequence is Ion-translocating oxidoreductase complex subunit E (230 aa).

6 helical membrane passes run 18–38 (ALVQ…ATNA), 39–59 (LGLG…VSAL), 63–83 (TPAE…VSAV), 86–106 (LINA…PLIV), 125–145 (WLSA…MFVL), and 182–202 (PFLL…MLAV).

It belongs to the NqrDE/RnfAE family. As to quaternary structure, the complex is composed of six subunits: RsxA, RsxB, RsxC, RsxD, RsxE and RsxG.

The protein resides in the cell inner membrane. Its function is as follows. Part of a membrane-bound complex that couples electron transfer with translocation of ions across the membrane. Required to maintain the reduced state of SoxR. This Salmonella arizonae (strain ATCC BAA-731 / CDC346-86 / RSK2980) protein is Ion-translocating oxidoreductase complex subunit E.